Consider the following 54-residue polypeptide: Large ribosomal subunit protein bL33 (54 aa).

This sequence belongs to the bacterial ribosomal protein bL33 family.

The protein is Large ribosomal subunit protein bL33 of Stenotrophomonas maltophilia (strain R551-3).